The chain runs to 307 residues: Ribosomal RNA small subunit methyltransferase A (307 aa).

S-adenosyl-L-methionine is bound by residues Asn35, Val37, Gly62, Glu83, Asp113, and Asn136.

Belongs to the class I-like SAM-binding methyltransferase superfamily. rRNA adenine N(6)-methyltransferase family. RsmA subfamily.

Its subcellular location is the cytoplasm. It catalyses the reaction adenosine(1518)/adenosine(1519) in 16S rRNA + 4 S-adenosyl-L-methionine = N(6)-dimethyladenosine(1518)/N(6)-dimethyladenosine(1519) in 16S rRNA + 4 S-adenosyl-L-homocysteine + 4 H(+). In terms of biological role, specifically dimethylates two adjacent adenosines (A1518 and A1519) in the loop of a conserved hairpin near the 3'-end of 16S rRNA in the 30S particle. May play a critical role in biogenesis of 30S subunits. The polypeptide is Ribosomal RNA small subunit methyltransferase A (Bifidobacterium longum subsp. infantis (strain ATCC 15697 / DSM 20088 / JCM 1222 / NCTC 11817 / S12)).